The chain runs to 89 residues: Cell division protein ZapA (89 aa).

The protein belongs to the ZapA family. Type 2 subfamily. As to quaternary structure, homodimer. Interacts with FtsZ.

It localises to the cytoplasm. In terms of biological role, activator of cell division through the inhibition of FtsZ GTPase activity, therefore promoting FtsZ assembly into bundles of protofilaments necessary for the formation of the division Z ring. It is recruited early at mid-cell but it is not essential for cell division. This is Cell division protein ZapA from Bacillus mycoides (strain KBAB4) (Bacillus weihenstephanensis).